We begin with the raw amino-acid sequence, 540 residues long: Anti-sigma-I factor RsgI7 (540 aa).

A RsgI N-terminal anti-sigma domain is found at 1–48; it reads MRAMVVDMNDKYAVVVNKEGQYIKIKRKAEHRLGYQVELPDRVIGFER. Over 1–50 the chain is Cytoplasmic; it reads MRAMVVDMNDKYAVVVNKEGQYIKIKRKAEHRLGYQVELPDRVIGFERRT. Residues 51 to 73 form a helical membrane-spanning segment; sequence LLKVVSVAAALLIVSSISFAVYS. Over 74-540 the chain is Extracellular; it reads YNLPYSYVNV…PGKEILKKRC (467 aa). 5 stretches are compositionally biased toward basic and acidic residues: residues 238–256, 319–329, 338–351, 359–370, and 398–419; these read DIKK…KKVN, SGIDKGNKDSK, NDVK…KTNS, VSKDNKNDKADG, and SKDD…EDNK. Disordered regions lie at residues 238 to 429 and 481 to 540; these read DIKK…CPQY and QEEQ…KKRC. Positions 451–501 form a coiled coil; the sequence is KEDMTKQNDEWFKKMQEEQKKQYDEWLKKMQEEQKKQHDEWVKKMEEMKNT.

Interacts (via RsgI N-terminal anti-sigma domain) with SigI7.

The protein resides in the cell membrane. Anti-sigma factor for SigI7. Negatively regulates SigI7 activity through direct interaction. The protein is Anti-sigma-I factor RsgI7 of Acetivibrio thermocellus (strain ATCC 27405 / DSM 1237 / JCM 9322 / NBRC 103400 / NCIMB 10682 / NRRL B-4536 / VPI 7372) (Clostridium thermocellum).